A 302-amino-acid chain; its full sequence is tRNA dimethylallyltransferase (302 aa).

8-15 contributes to the ATP binding site; sequence GSSGSGKS. Substrate is bound at residue 10–15; that stretch reads SGSGKS. The tract at residues 33–36 is interaction with substrate tRNA; that stretch reads DSLS.

Belongs to the IPP transferase family. In terms of assembly, monomer. Mg(2+) serves as cofactor.

The enzyme catalyses adenosine(37) in tRNA + dimethylallyl diphosphate = N(6)-dimethylallyladenosine(37) in tRNA + diphosphate. Functionally, catalyzes the transfer of a dimethylallyl group onto the adenine at position 37 in tRNAs that read codons beginning with uridine, leading to the formation of N6-(dimethylallyl)adenosine (i(6)A). The polypeptide is tRNA dimethylallyltransferase (Helicobacter hepaticus (strain ATCC 51449 / 3B1)).